Here is a 200-residue protein sequence, read N- to C-terminus: Adenylate kinase (200 aa).

10 to 15 (GAGKGT) contacts ATP. The tract at residues 30-59 (STGDMLRAAVAAETPVGLEAKAIMESGGLV) is NMP. AMP is bound by residues threonine 31, arginine 36, 57–59 (GLV), 85–88 (GFPR), and glutamine 92. Residues 126–142 (KRAEETAARGQPVRKDD) form an LID region. An ATP-binding site is contributed by arginine 127. Residues arginine 139 and arginine 150 each coordinate AMP. Lysine 178 lines the ATP pocket.

This sequence belongs to the adenylate kinase family. In terms of assembly, monomer.

It localises to the cytoplasm. The catalysed reaction is AMP + ATP = 2 ADP. It participates in purine metabolism; AMP biosynthesis via salvage pathway; AMP from ADP: step 1/1. Its function is as follows. Catalyzes the reversible transfer of the terminal phosphate group between ATP and AMP. Plays an important role in cellular energy homeostasis and in adenine nucleotide metabolism. The chain is Adenylate kinase from Methylorubrum extorquens (strain PA1) (Methylobacterium extorquens).